The sequence spans 353 residues: MAATKRKRRGGFAVQAKKPKRNEIDAEPPAKRHATAEEVEEEERDRIPGPVCKGKWKNKERILIFSSRGINFRTRHLMQDLRMLMPHSKADTKMDRKDKLFVINEVCEMKNCNKCIYFEAKKKQDLYMWLSNSPHGPSAKFLVQNIHTLAELKMTGNCLKGSRPLLSFDPAFDELPHYALLKELLIQIFSTPRYHPKSQPFVDHVFTFTILDNRIWFRNFQIIEEDAALVEIGPRFVLNLIKIFQGSFGGPTLYENPHYQSPNMHRRVIRSITAAKYREKQQVKDVQKLRKKEPKTLLPHDPTADVFVTPAEEKPIEIQWVKPEPKVDLKARKKRIYKRQRKMKQRMDSGKTK.

A compositionally biased stretch (basic residues) spans 1–10 (MAATKRKRRG). The segment at 1–46 (MAATKRKRRGGFAVQAKKPKRNEIDAEPPAKRHATAEEVEEEERDR) is disordered. Over residues 21-36 (RNEIDAEPPAKRHATA) the composition is skewed to basic and acidic residues. One can recognise a Brix domain in the interval 60-249 (ERILIFSSRG…LIKIFQGSFG (190 aa)). Lys160 is covalently cross-linked (Glycyl lysine isopeptide (Lys-Gly) (interchain with G-Cter in SUMO2)). Position 261 is a phosphoserine (Ser261). Position 276 is an N6-acetyllysine (Lys276). Residues Lys314 and Lys322 each participate in a glycyl lysine isopeptide (Lys-Gly) (interchain with G-Cter in SUMO2) cross-link.

Belongs to the BRX1 family.

It localises to the nucleus. The protein resides in the nucleolus. Its function is as follows. Required for biogenesis of the 60S ribosomal subunit. The sequence is that of Ribosome biogenesis protein BRX1 homolog (BRIX1) from Homo sapiens (Human).